The following is a 281-amino-acid chain: Tumor necrosis factor ligand superfamily member 10 (281 aa).

The Cytoplasmic portion of the chain corresponds to 1–17; sequence MAMMEVQGGPSLGQTCV. The chain crosses the membrane as a helical; Signal-anchor for type II membrane protein span at residues 18-38; it reads LIVIFTVLLQSLCVAVTYVYF. Over 39–281 the chain is Extracellular; that stretch reads TNELKQMQDK…ASFFGAFLVG (243 aa). The 159-residue stretch at 122 to 280 folds into the THD domain; it reads VAAHITGTRG…EASFFGAFLV (159 aa). Residues 124–144 are disordered; it reads AHITGTRGRSNTLSSPNSKNE. Positions 130 to 141 are enriched in polar residues; sequence RGRSNTLSSPNS. C230 lines the Zn(2+) pocket.

The protein belongs to the tumor necrosis factor family. As to quaternary structure, homotrimer. One TNFSF10 homotrimer interacts with three TNFSF10A mononers. One TNFSF10 homotrimer interacts with three TNFSF10B mononers. Tyrosine phosphorylated by PKDCC/VLK. In terms of tissue distribution, widespread; most predominant in spleen, lung and prostate.

The protein localises to the cell membrane. The protein resides in the secreted. In terms of biological role, cytokine that binds to TNFRSF10A/TRAILR1, TNFRSF10B/TRAILR2, TNFRSF10C/TRAILR3, TNFRSF10D/TRAILR4 and possibly also to TNFRSF11B/OPG. Induces apoptosis. Its activity may be modulated by binding to the decoy receptors TNFRSF10C/TRAILR3, TNFRSF10D/TRAILR4 and TNFRSF11B/OPG that cannot induce apoptosis. This is Tumor necrosis factor ligand superfamily member 10 (TNFSF10) from Homo sapiens (Human).